Consider the following 200-residue polypeptide: Serine/arginine-rich splicing factor RSZ23 (200 aa).

Residues 2 to 71 (ARVYVGNLDP…NGWRVELSTK (70 aa)) enclose the RRM domain. The segment at 86 to 103 (MKCYECGEPGHFARECRL) adopts a CCHC-type zinc-finger fold. The tract at residues 105–200 (IGSGGLGSGR…REESPYANNA (96 aa)) is disordered. The segment covering 113-139 (GRRRSRSRSRSPRYRGRSRSRSPRYRR) has biased composition (basic residues).

This sequence belongs to the splicing factor SR family. In terms of processing, extensively phosphorylated on serine residues in the RS domain. In terms of tissue distribution, expressed in roots, leaves and immature seeds.

The protein localises to the nucleus. Functionally, involved in pre-mRNA splicing. In protoplast assay, enhances splicing efficiency of WAXY intron 1 and alters the selection of the 5'-splice sites by stimulating site 1 (proximal site). This is Serine/arginine-rich splicing factor RSZ23 (RSZ23) from Oryza sativa subsp. japonica (Rice).